Reading from the N-terminus, the 556-residue chain is 2-succinyl-5-enolpyruvyl-6-hydroxy-3-cyclohexene-1-carboxylate synthase (556 aa).

Belongs to the TPP enzyme family. MenD subfamily. Homodimer. The cofactor is Mg(2+). Requires Mn(2+) as cofactor. Thiamine diphosphate is required as a cofactor.

It catalyses the reaction isochorismate + 2-oxoglutarate + H(+) = 5-enolpyruvoyl-6-hydroxy-2-succinyl-cyclohex-3-ene-1-carboxylate + CO2. Its pathway is quinol/quinone metabolism; 1,4-dihydroxy-2-naphthoate biosynthesis; 1,4-dihydroxy-2-naphthoate from chorismate: step 2/7. It functions in the pathway quinol/quinone metabolism; menaquinone biosynthesis. Its function is as follows. Catalyzes the thiamine diphosphate-dependent decarboxylation of 2-oxoglutarate and the subsequent addition of the resulting succinic semialdehyde-thiamine pyrophosphate anion to isochorismate to yield 2-succinyl-5-enolpyruvyl-6-hydroxy-3-cyclohexene-1-carboxylate (SEPHCHC). The chain is 2-succinyl-5-enolpyruvyl-6-hydroxy-3-cyclohexene-1-carboxylate synthase from Salmonella typhimurium (strain LT2 / SGSC1412 / ATCC 700720).